We begin with the raw amino-acid sequence, 130 residues long: Neelaredoxin (130 aa).

Positions 15, 17, 45, 51, 115, and 118 each coordinate Fe cation.

Belongs to the desulfoferrodoxin family. Monomer. Requires Fe cation as cofactor.

It carries out the reaction 2 superoxide + 2 H(+) = H2O2 + O2. In terms of biological role, non-heme iron protein. The chain is Neelaredoxin (nlr) from Megalodesulfovibrio gigas (Desulfovibrio gigas).